A 332-amino-acid chain; its full sequence is Anthranilate phosphoribosyltransferase (332 aa).

5-phospho-alpha-D-ribose 1-diphosphate-binding positions include G79, 82–83 (GD), T87, 89–92 (NIST), 107–115 (KHGNRSVSS), and S119. G79 is a binding site for anthranilate. S91 provides a ligand contact to Mg(2+). N110 provides a ligand contact to anthranilate. Residue R165 coordinates anthranilate. Positions 223 and 224 each coordinate Mg(2+).

The protein belongs to the anthranilate phosphoribosyltransferase family. Homodimer. Mg(2+) serves as cofactor.

The catalysed reaction is N-(5-phospho-beta-D-ribosyl)anthranilate + diphosphate = 5-phospho-alpha-D-ribose 1-diphosphate + anthranilate. It functions in the pathway amino-acid biosynthesis; L-tryptophan biosynthesis; L-tryptophan from chorismate: step 2/5. Catalyzes the transfer of the phosphoribosyl group of 5-phosphorylribose-1-pyrophosphate (PRPP) to anthranilate to yield N-(5'-phosphoribosyl)-anthranilate (PRA). This is Anthranilate phosphoribosyltransferase from Vibrio vulnificus (strain CMCP6).